We begin with the raw amino-acid sequence, 79 residues long: uncharacterized protein (79 aa).

This sequence belongs to the asfivirus D79L family.

This is an uncharacterized protein from Ornithodoros (relapsing fever ticks).